We begin with the raw amino-acid sequence, 155 residues long: FUN14 domain-containing protein 1 (155 aa).

The Cytoplasmic portion of the chain corresponds to 1–47 (MASRNPPPQDYESDDESYEVLDLTEYARRHHWWNRVFGHSSGPMVEK). Residues serine 13 and serine 17 each carry the phosphoserine modification. The residue at position 18 (tyrosine 18) is a Phosphotyrosine; by SRC. A YXXL motif is present at residues 18–21 (YEVL). The helical transmembrane segment at 48 to 68 (YSVATQIVMGGVTGWCAGFLF) threads the bilayer. The Mitochondrial intermembrane portion of the chain corresponds to 69-74 (QKVGKL). Residues 75-95 (AATAVGGGFLLLQVASHSGYV) traverse the membrane as a helical segment. Residues 96 to 133 (QIDWKRVEKDVNKAKRQIKKRANKAAPEINNIIEEATD) lie on the Cytoplasmic side of the membrane. Residue lysine 119 forms a Glycyl lysine isopeptide (Lys-Gly) (interchain with G-Cter in ubiquitin) linkage. Residues 134-154 (FIKQNIVISSGFVGGFLLGLA) form a helical membrane-spanning segment. A topological domain (mitochondrial intermembrane) is located at residue serine 155.

This sequence belongs to the FUN14 family. As to quaternary structure, interacts (via YXXL motif) with MAP1 LC3 family proteins MAP1LC3A, MAP1LC3B and GABARAP. Interacts with DNM1L/DPR1. Interacts with GPX4. Phosphorylation at Ser-13 by CK2 and at Tyr-18 by SRC inhibits activation of mitophagy. Following hypoxia, dephosphorylated at Tyr-18, leading to interaction with MAP1 LC3 family proteins and triggering mitophagy. Dephosphorylation is mediated by PGAM5. Phosphorylated by ULK1 at Ser-17 which enhances FUNDC1 binding to LC3. Post-translationally, ubiquitinated on Lys-119. Deubiquitinated by USP19; leading to hypoxia-induced DRP1 oligomerization and GTPase activity.

It is found in the mitochondrion outer membrane. Its function is as follows. Integral mitochondrial outer-membrane protein that mediates the formation of mitochondria-associated endoplasmic reticulum membranes (MAMs). In turn, mediates angiogenesis and neoangiogenesis through interference with intracellular Ca(2+) communication and regulation of the vascular endothelial growth factor receptor KDR/VEGFR2 expression at both mRNA and protein levels. Also acts as an activator of hypoxia-induced mitophagy, an important mechanism for mitochondrial quality and homeostasis, by interacting with and recruiting LC3 protein family to mitochondria. Mechanistically, recruits DRP1 at ER-mitochondria contact sites leading to DRP1 oligomerization and GTPase activity to facilitate mitochondrial fission during hypoxia. Additionally, plays a role in hepatic ferroptosis by interacting directly with glutathione peroxidase/GPX4 to facilitate its recruitment into mitochondria through TOM/TIM complex where it is degraded by mitophagy. The protein is FUN14 domain-containing protein 1 (Fundc1) of Mus musculus (Mouse).